Consider the following 744-residue polypeptide: Leukocyte immunoglobulin-like receptor subfamily B member 3A (744 aa).

An N-terminal signal peptide occupies residues methionine 1 to glycine 24. At serine 25–lysine 543 the chain is on the extracellular side. Ig-like C2-type domains follow at residues leucine 26–glycine 119, tyrosine 121–glycine 221, leucine 223–glycine 316, tyrosine 320–glycine 419, and phenylalanine 426–glycine 520. Intrachain disulfides connect cysteine 49–cysteine 98, cysteine 144–cysteine 197, and cysteine 246–cysteine 295. N-linked (GlcNAc...) asparagine glycosylation is present at asparagine 79. Asparagine 338 carries N-linked (GlcNAc...) asparagine glycosylation. Cysteine 343 and cysteine 395 are disulfide-bonded. A glycan (N-linked (GlcNAc...) asparagine) is linked at asparagine 440. Cysteine 445 and cysteine 496 are oxidised to a cystine. A helical transmembrane segment spans residues alanine 544–leucine 564. Topologically, residues arginine 565 to glutamine 744 are cytoplasmic. Basic and acidic residues predominate over residues phenylalanine 572–glutamate 584. Disordered regions lie at residues phenylalanine 572–tyrosine 617, glutamate 630–serine 652, and glutamate 667–glutamine 744. Positions serine 615–valine 620 match the ITIM motif 1 motif. 2 consecutive short sequence motifs (ITIM motif) follow at residues valine 695–leucine 700 and serine 725–leucine 730. Phosphotyrosine; by LYN occurs at positions 697 and 727.

In terms of assembly, interacts with LYN, PTPN6/SHP-1 and PTPN11/SHP-2. Post-translationally, phosphorylated on tyrosine residues by LYN. Phosphorylation at Tyr-697 and Tyr-727 is important for interaction with PTPN6/SHP-1 and PTPN11/SHP-2.

It is found in the cell membrane. May act as receptor for class I MHC antigens. Becomes activated upon coligation with immune receptors, such as FCGR2B and the B-cell receptor. Down-regulates antigen-induced B-cell activation by recruiting phosphatases to its immunoreceptor tyrosine-based inhibitor motifs (ITIM). The sequence is that of Leukocyte immunoglobulin-like receptor subfamily B member 3A from Rattus norvegicus (Rat).